The chain runs to 197 residues: Large ribosomal subunit protein bL25 (197 aa).

Belongs to the bacterial ribosomal protein bL25 family. CTC subfamily. As to quaternary structure, part of the 50S ribosomal subunit; part of the 5S rRNA/L5/L18/L25 subcomplex. Contacts the 5S rRNA. Binds to the 5S rRNA independently of L5 and L18.

Functionally, this is one of the proteins that binds to the 5S RNA in the ribosome where it forms part of the central protuberance. The sequence is that of Large ribosomal subunit protein bL25 from Pseudomonas putida (strain ATCC 700007 / DSM 6899 / JCM 31910 / BCRC 17059 / LMG 24140 / F1).